The sequence spans 316 residues: CD276 antigen (316 aa).

The first 28 residues, 1-28 (MLRGWGGPSVGVSMGTALGVLCLCLTGA), serve as a signal peptide directing secretion. Positions 29–139 (VEVQVSEDPV…DSAAVSLQVA (111 aa)) constitute an Ig-like V-type domain. Residues 29-248 (VEVQVSEDPV…GQPMTFPPEA (220 aa)) lie on the Extracellular side of the membrane. N-linked (GlcNAc...) asparagine glycosylation is found at Asn104, Asn189, and Asn215. The Ig-like C2-type domain occupies 145–238 (PSMTLEPNKD…QDAHGSVTIT (94 aa)). Cys165 and Cys220 are joined by a disulfide. A helical membrane pass occupies residues 249-269 (LWVTVGLSVCLVILLVALAFV). The Cytoplasmic portion of the chain corresponds to 270 to 316 (CWRKIKQSCEEENAGAEDQDGDGEGSKTALRPLKHSENKEDDGQEIA). Residues 281–292 (ENAGAEDQDGDG) are compositionally biased toward acidic residues. The segment at 281 to 316 (ENAGAEDQDGDGEGSKTALRPLKHSENKEDDGQEIA) is disordered.

This sequence belongs to the immunoglobulin superfamily. BTN/MOG family. In terms of assembly, interacts with TREML2 and this interaction enhances T-cell activation.

The protein resides in the membrane. Its function is as follows. Modulates T-cell-mediated immune responses and the development of acute and chronic transplant rejection. May play a positive regulatory role in bone formation and has a dual role in the bone-immune interface. Induces antitumor immunity as it activates both acquired and innate immunity leading to natural killer cell and CD8 T-cell dependent killing of tumor cells. This Rattus norvegicus (Rat) protein is CD276 antigen (Cd276).